A 265-amino-acid chain; its full sequence is uncharacterized protein (265 aa).

It is found in the mitochondrion. This is an uncharacterized protein from Paramecium tetraurelia.